The primary structure comprises 410 residues: MVKSFRMKALIAGAAVAAAVSAGAVSDVPAAKVLQPTAAYAAETVFSQNNGASGFLPGRYDVQAMAPAMFNWSRESRFAGNTDGTLKWQNDIRTTPQNGAGAVIDGDGTVYLHSRDGEMKAFNPDGSVKWVTGNLGKTYTQSPVLGTNGVIYLASYDKKIYFIDKETGEILTTVPLSGGPSSETVIGSDGTLYFSTLDNYVHAIKPTSKSTWTERWKLKTNGVVSSVPVLAKNGTVYVGTYNYVFYAINSGTGQVKWSRTTSNAFKGYPVIDKDGNIYAGNQDGQLYAYTSTGSLKWTFPLNGFSSSSPAIDHNGNIYIGSGSGELFSISKNGDMNWSFYTDGPVRTAPLIDAKGTVYFGSDDMKVYAADANGNELWSYQTDSNVVSSPQLAEDGTLYIGSYTKLMAFGK.

The signal sequence occupies residues 1–41 (MVKSFRMKALIAGAAVAAAVSAGAVSDVPAAKVLQPTAAYA).

Interacts with PcrA, Pdp, YclM, YkvL, YhcQ and YomL. The interaction with PcrA is not essential for cell viability or repair of UV-induced lesions.

It localises to the secreted. Its function is as follows. Increases the processivity of the PcrA helicase, but does not bind to DNA. This is an uncharacterized protein from Bacillus subtilis (strain 168).